The primary structure comprises 348 residues: Eukaryotic translation initiation factor 3 subunit F (348 aa).

Residues 30–166 form the MPN domain; the sequence is VVIQPQAIFS…TRTYISAPVG (137 aa). The span at 312–327 shows a compositional bias: gly residues; it reads STAIGGTGAESGGQRG. Residues 312–348 form a disordered region; the sequence is STAIGGTGAESGGQRGGQRNNRQRGGQQRNQAEELRA. Over residues 328–341 the composition is skewed to low complexity; it reads GQRNNRQRGGQQRN.

This sequence belongs to the eIF-3 subunit F family. As to quaternary structure, component of the eukaryotic translation initiation factor 3 (eIF-3) complex.

The protein resides in the cytoplasm. Its function is as follows. Component of the eukaryotic translation initiation factor 3 (eIF-3) complex, which is involved in protein synthesis of a specialized repertoire of mRNAs and, together with other initiation factors, stimulates binding of mRNA and methionyl-tRNAi to the 40S ribosome. The eIF-3 complex specifically targets and initiates translation of a subset of mRNAs involved in cell proliferation. The sequence is that of Eukaryotic translation initiation factor 3 subunit F from Coccidioides immitis (strain RS) (Valley fever fungus).